Reading from the N-terminus, the 192-residue chain is Ion-translocating oxidoreductase complex subunit A (192 aa).

6 helical membrane-spanning segments follow: residues 5–25 (LLLL…FLGL), 39–59 (IGMS…SYLV), 65–85 (LPFD…AVVV), 102–122 (ALGI…VALL), 134–154 (AIYG…FSAM), and 171–191 (AIAM…TGLV).

The protein belongs to the NqrDE/RnfAE family. In terms of assembly, the complex is composed of six subunits: RnfA, RnfB, RnfC, RnfD, RnfE and RnfG.

It is found in the cell inner membrane. In terms of biological role, part of a membrane-bound complex that couples electron transfer with translocation of ions across the membrane. This Shewanella baltica (strain OS185) protein is Ion-translocating oxidoreductase complex subunit A.